Consider the following 827-residue polypeptide: ADP-ribosylation factor GTPase-activating protein AGD3 (827 aa).

One can recognise a BAR domain in the interval 1 to 225; the sequence is MHFTKLDDSP…INQVLTYAQQ (225 aa). 2 coiled-coil regions span residues 116-139 and 223-253; these read HEVK…REKF and AQQS…RESR. The disordered stretch occupies residues 246-269; it reads RQVDRESRWGSNGSNGSPNGDGIQ. Over residues 255–267 the composition is skewed to low complexity; it reads GSNGSNGSPNGDG. The region spanning 292 to 430 is the PH domain; that stretch reads QTIRQGYLSK…WIEKITGVIA (139 aa). A disordered region spans residues 439–467; it reads EQRLPGSPMGSGHHRSASESSSYESSEYD. At S445 the chain carries Phosphoserine. The Arf-GAP domain occupies 501-643; the sequence is EKPIDALRKV…LFVRRSRDSD (143 aa). The C4-type zinc finger occupies 516–539; that stretch reads CADCGAPEPDWASLNLGVLVCIEC. ANK repeat units lie at residues 728-757, 761-790, and 794-825; these read GGSS…NVNA, SGQT…DPEA, and EGKT…YNHR.

Homodimer. Interacts with DRP1A. Interacts with VAB. As to expression, broadly expressed. Detected in developing veins of the leaf and root. Detected in roots, hypocotyls, cotyledons, leaves, siliques and shoot apical meristems.

Its subcellular location is the golgi apparatus. The protein resides in the trans-Golgi network. Its activity is regulated as follows. ARF GAP activity strongly enhanced by phosphatidylinositol 4-monophosphate (PIP) and moderately enhanced by phosphatidylinositol 4,5-bisphosphate (PIP2). Its function is as follows. GTPase-activating protein (GAP) for ADP ribosylation factor (ARF). Involved in the spatial control of provascular differentiation. Required for the formation of the normal pattern of continuous secondary veins. Involved in auxin signaling but not in polar auxin transport or in auxin responses. Required for PIN1 internalization in roots. The protein is ADP-ribosylation factor GTPase-activating protein AGD3 (AGD3) of Arabidopsis thaliana (Mouse-ear cress).